The following is a 245-amino-acid chain: Oncostatin-M (245 aa).

An N-terminal signal peptide occupies residues 1–26; sequence MGAQRMQRTLLSLVLRLLLLCTVATG. 2 disulfide bridges follow: cysteine 28-cysteine 135 and cysteine 71-cysteine 177. Asparagine 97 carries an N-linked (GlcNAc...) asparagine glycan. Disordered stretches follow at residues 143–171 and 197–245; these read SSDP…STFQ and WGER…APAR. The segment covering 153 to 166 has biased composition (pro residues); that stretch reads QPGPGPTPLPPTPP. The span at 203–218 shows a compositional bias: basic residues; that stretch reads RSRRHSPCRALKRGAR. Positions 207–245 are excised as a propeptide; that stretch reads HSPCRALKRGARRTQPFPEIRRLAPRGQPPGSLWGAPAR.

It belongs to the LIF/OSM family. Post-translationally, propeptide processing is not important for receptor binding activity but may be important growth-inhibitory activity.

The protein resides in the secreted. Functionally, growth regulator. Inhibits the proliferation of a number of tumor cell lines. It regulates cytokine production, including IL-6, G-CSF and GM-CSF from endothelial cells. Uses both type I OSM receptor (heterodimers composed of LIFR and IL6ST) and type II OSM receptor (heterodimers composed of OSMR and IL6ST). Involved in the maturation of fetal hepatocytes, thereby promoting liver development and regeneration. In Bos taurus (Bovine), this protein is Oncostatin-M (OSM).